The primary structure comprises 350 residues: Bifunctional methylenetetrahydrofolate dehydrogenase/cyclohydrolase, mitochondrial (350 aa).

The transit peptide at 1–35 directs the protein to the mitochondrion; it reads MASVSLLSALAVRLLRPTHGCHPRLQPFHLAAVRN. N6-acetyllysine; alternate is present on Lys50. Lys50 participates in a covalent cross-link: Glycyl lysine isopeptide (Lys-Gly) (interchain with G-Cter in SUMO2); alternate. Substrate contacts are provided by residues 84 to 88 and 131 to 133; these read YVLNK and VQL. Residues 200–202 and Arg233 contribute to the NAD(+) site; that span reads GRS. 309–313 provides a ligand contact to substrate; sequence PGGVG.

Belongs to the tetrahydrofolate dehydrogenase/cyclohydrolase family. Homodimer. Mg(2+) is required as a cofactor.

Its subcellular location is the mitochondrion. The catalysed reaction is (6R)-5,10-methylene-5,6,7,8-tetrahydrofolate + NAD(+) = (6R)-5,10-methenyltetrahydrofolate + NADH. It carries out the reaction (6R)-5,10-methenyltetrahydrofolate + H2O = (6R)-10-formyltetrahydrofolate + H(+). Its function is as follows. Although its dehydrogenase activity is NAD-specific, it can also utilize NADP at a reduced efficiency. The polypeptide is Bifunctional methylenetetrahydrofolate dehydrogenase/cyclohydrolase, mitochondrial (Mthfd2) (Mus musculus (Mouse)).